The sequence spans 477 residues: POC1 centriolar protein homolog B (477 aa).

WD repeat units follow at residues 16-55 (GHKAAITSADFSPNCKQIATASWDTFLMLWSLKPHARAYR), 58-97 (GHKDVVTSLQFSPQGNLLASASRDKTVRLWVLDRKGKSSE), 100-139 (AHTAPVRSVDFSADGQFLVTASEDKSIKVWSMYRQRFLYS), 142-181 (RHTHWVRCAKFSPDGRLIVSCSEDKTIKIWDTTSKQCVNN), 183-223 (SDSV…LLQH), 226-265 (VHSCGVNCLSFHPSGNSLVTASSDGTVKILDLVEGRLIYT), and 268-307 (GHTGPVFTVSFSKDGELFTSGGADAQVLVWRTSFNQVHYR). Residues 449 to 469 (EQRLSLTEDKLKDCLENQQKL) adopt a coiled-coil conformation.

Belongs to the WD repeat POC1 family. In terms of assembly, interacts with POC1A. Interacts with FAM161A. Interacts with CEP44; the interaction is direct and recruits POC1B to centriolar microtubules. Forms a microtubule-associated complex with POC5, CETN2 and FAM161A. Interacts with CCDC15. Post-translationally, phosphorylated in mitotic cells that may be mediated by CDK1.

It localises to the cytoplasm. It is found in the cytoskeleton. Its subcellular location is the microtubule organizing center. The protein localises to the centrosome. The protein resides in the centriole. It localises to the cilium basal body. It is found in the spindle pole. Its function is as follows. Plays an important role in centriole assembly and/or stability and ciliogenesis. Involved in early steps of centriole duplication, as well as in the later steps of centriole length control. Acts in concert with POC1A to ensure centriole integrity and proper mitotic spindle formation. Required for primary cilia formation, ciliary length and also cell proliferation. Required for retinal integrity. Acts as a positive regulator of centriole elongation. This Rattus norvegicus (Rat) protein is POC1 centriolar protein homolog B (Poc1b).